The primary structure comprises 175 residues: MATALVLGYSAFDLGLFSDKDPRLKLIKKAIRKDLEAMAADGVSWLVFTGSLGFEYWVLEVAQEMKTEYGFQLATIFAFETHGENWNEGNQMKLSRFKQVDFVKYAYPRYEHKGQLRDYQQFLLENTTSSYLFYDEENETKLAYFYQKMKNQEDYFIKRLTFDQLNELAENFSEN.

It belongs to the UPF0398 family.

This chain is UPF0398 protein SPD_0338, found in Streptococcus pneumoniae serotype 2 (strain D39 / NCTC 7466).